An 84-amino-acid chain; its full sequence is uncharacterized protein (84 aa).

Residues 34–54 show a composition bias toward low complexity; that stretch reads ATSTASSSAAKNTTSSSKNAA. The tract at residues 34–57 is disordered; it reads ATSTASSSAAKNTTSSSKNAAPGM. The N-linked (GlcNAc...) asparagine glycan is linked to Asn-45. A helical transmembrane segment spans residues 66–83; sequence YGIIMAAFAAVSFVLGTG.

The protein localises to the endoplasmic reticulum membrane. This is an uncharacterized protein from Saccharomyces cerevisiae (strain ATCC 204508 / S288c) (Baker's yeast).